The chain runs to 263 residues: Apolipoprotein A-I (263 aa).

Residues 1 to 18 form the signal peptide; that stretch reads MKAVVLAVAVLFLTGSQA. Repeat copies occupy residues 66–87 and 88–109. Positions 66 to 263 are 10 X approximate tandem repeats; the sequence is LKLLDNWDTL…DEVSKKLSAQ (198 aa). The residue at position 108 (Met-108) is a Methionine sulfoxide. A 3; half-length repeat occupies 110–120; sequence KDLVEVKEKVQ. 5 consecutive repeat copies span residues 121–142, 143–164, 165–186, 187–206, and 207–228. One copy of the 9; half-length repeat lies at 229-239; sequence PALEDLRLGLL. Copy 10 of the repeat occupies 240–263; it reads PVLESLKASFLSSIDEVSKKLSAQ.

This sequence belongs to the apolipoprotein A1/A4/E family. As to quaternary structure, homodimer. Interacts with APOA1BP and CLU. Component of a sperm activating protein complex (SPAP), consisting of APOA1, an immunoglobulin heavy chain, an immunoglobulin light chain and albumin. Interacts with NDRG1. Interacts with SCGB3A2. Interacts with NAXE and YJEFN3. Post-translationally, glycosylated. In terms of processing, palmitoylated. Phosphorylation sites are present in the extracellular medium.

It localises to the secreted. Functionally, participates in the reverse transport of cholesterol from tissues to the liver for excretion by promoting cholesterol efflux from tissues and by acting as a cofactor for the lecithin cholesterol acyltransferase (LCAT). As part of the SPAP complex, activates spermatozoa motility. This Octodon degus (Degu) protein is Apolipoprotein A-I (APOA1).